The sequence spans 108 residues: Parvalbumin alpha (108 aa).

Residue Ala1 is modified to N-acetylalanine. EF-hand domains lie at 37–72 and 76–108; these read MSAN…FAAD and LTDA…VHEA. Ca(2+)-binding residues include Asp50, Asp52, Ser54, Phe56, Glu58, Glu61, Asp89, Asp91, Asp93, Lys95, and Glu100.

This sequence belongs to the parvalbumin family.

In muscle, parvalbumin is thought to be involved in relaxation after contraction. It binds two calcium ions. The chain is Parvalbumin alpha from Esox lucius (Northern pike).